We begin with the raw amino-acid sequence, 423 residues long: Gamma-glutamyl phosphate reductase (423 aa).

Residues 1–14 (MTLQAAPRSAAAQQ) are compositionally biased toward low complexity. The tract at residues 1–25 (MTLQAAPRSAAAQQREPDLRQEVHD) is disordered. Residues 15-25 (REPDLRQEVHD) are compositionally biased toward basic and acidic residues.

It belongs to the gamma-glutamyl phosphate reductase family.

Its subcellular location is the cytoplasm. The catalysed reaction is L-glutamate 5-semialdehyde + phosphate + NADP(+) = L-glutamyl 5-phosphate + NADPH + H(+). The protein operates within amino-acid biosynthesis; L-proline biosynthesis; L-glutamate 5-semialdehyde from L-glutamate: step 2/2. Catalyzes the NADPH-dependent reduction of L-glutamate 5-phosphate into L-glutamate 5-semialdehyde and phosphate. The product spontaneously undergoes cyclization to form 1-pyrroline-5-carboxylate. The polypeptide is Gamma-glutamyl phosphate reductase (Mycobacterium marinum (strain ATCC BAA-535 / M)).